Consider the following 776-residue polypeptide: Glucocorticoid receptor (776 aa).

Disordered regions lie at residues 1-25 (MDPKDLLKPSSGSPAVRGSPHYNDK), 47-86 (SCPTSTASQSNTRQQQHFQKQLTATGDSTNGLNNNVPQPD), and 394-415 (SSPGIRSDASPSPSTSSTSTGP). A modulating region spans residues 1–419 (MDPKDLLKPS…STSTGPPPKL (419 aa)). Positions 47-83 (SCPTSTASQSNTRQQQHFQKQLTATGDSTNGLNNNVP) are enriched in polar residues. Low complexity predominate over residues 403–413 (SPSPSTSSTST). 2 NR C4-type zinc fingers span residues 420-440 (CLVCSDEASGCHYGVLTCGSC) and 456-480 (CAGRNDCIIDKIRRKNCPACRYRKC). The nuclear receptor DNA-binding region spans 420–485 (CLVCSDEASG…RYRKCLQAGM (66 aa)). The tract at residues 486 to 522 (NLEARKTKKKIKGIQQSTTATARESPETSMTRTLVPA) is hinge. The region spanning 523–757 (SVAQLTPTLI…FPDMLSEIIS (235 aa)) is the NR LBD domain.

Belongs to the nuclear hormone receptor family. NR3 subfamily. As to quaternary structure, heteromultimeric cytoplasmic complex with HSP90. Upon ligand binding the complex undergoes a conformation change and moves to the nucleus, where it dissociates. Binds to DNA as a homodimer, and as heterodimer with NR3C2. Interaction with numerous other transcription factors modulates transcription activation. As to expression, expressed in liver with relative abundance.

It localises to the cytoplasm. It is found in the nucleus. The protein localises to the mitochondrion. The protein resides in the cytoskeleton. Its subcellular location is the spindle. It localises to the microtubule organizing center. It is found in the centrosome. Functionally, receptor for glucocorticoids (GC). Has a dual mode of action: as a transcription factor that binds to glucocorticoid response elements (GRE), both for nuclear and mitochondrial DNA, and as a modulator of other transcription factors. Affects inflammatory responses, cellular proliferation and differentiation in target tissues. Involved in chromatin remodeling. Plays a role in rapid mRNA degradation by binding to the 5' UTR of target mRNAs and interacting with PNRC2 in a ligand-dependent manner which recruits the RNA helicase UPF1 and the mRNA-decapping enzyme DCP1A, leading to RNA decay. Could act as a coactivator for STAT5-dependent transcription upon growth hormone (GH) stimulation and could reveal an essential role of hepatic GR in the control of body growth. Mediates glucocorticoid-induced apoptosis. Promotes accurate chromosome segregation during mitosis. May act as a tumor suppressor. May play a negative role in adipogenesis through the regulation of lipolytic and antilipogenic gene expression. In Xenopus laevis (African clawed frog), this protein is Glucocorticoid receptor (nr3c1).